A 458-amino-acid chain; its full sequence is Alpha-glucosides-binding periplasmic protein AglE (458 aa).

A signal peptide spans 1–27; sequence MKRSLLIGVAAFALLAGTAGLAGTAGA.

The protein belongs to the bacterial solute-binding protein 1 family.

The protein resides in the periplasm. In terms of biological role, part of the binding-protein-dependent transport system for alpha-glucosides such as sucrose, maltose and trehalose. This Rhizobium meliloti (strain 1021) (Ensifer meliloti) protein is Alpha-glucosides-binding periplasmic protein AglE (aglE).